The chain runs to 698 residues: DNA ligase (698 aa).

NAD(+) contacts are provided by residues 40-44 (DGEYD), 89-90 (SL), and E123. K125 serves as the catalytic N6-AMP-lysine intermediate. NAD(+)-binding residues include R146, E184, K300, and K324. Zn(2+) is bound by residues C418, C421, C436, and C442. Residues 620 to 698 (AGDSPLAGKT…EAEFRAMSGG (79 aa)) enclose the BRCT domain.

The protein belongs to the NAD-dependent DNA ligase family. LigA subfamily. Mg(2+) serves as cofactor. It depends on Mn(2+) as a cofactor.

It carries out the reaction NAD(+) + (deoxyribonucleotide)n-3'-hydroxyl + 5'-phospho-(deoxyribonucleotide)m = (deoxyribonucleotide)n+m + AMP + beta-nicotinamide D-nucleotide.. In terms of biological role, DNA ligase that catalyzes the formation of phosphodiester linkages between 5'-phosphoryl and 3'-hydroxyl groups in double-stranded DNA using NAD as a coenzyme and as the energy source for the reaction. It is essential for DNA replication and repair of damaged DNA. The protein is DNA ligase of Rhodospirillum rubrum (strain ATCC 11170 / ATH 1.1.1 / DSM 467 / LMG 4362 / NCIMB 8255 / S1).